The following is a 150-amino-acid chain: UPF0178 protein Maqu_2186 (150 aa).

The protein belongs to the UPF0178 family.

This is UPF0178 protein Maqu_2186 from Marinobacter nauticus (strain ATCC 700491 / DSM 11845 / VT8) (Marinobacter aquaeolei).